A 278-amino-acid polypeptide reads, in one-letter code: Pyrroline-5-carboxylate reductase (278 aa).

It belongs to the pyrroline-5-carboxylate reductase family.

Its subcellular location is the cytoplasm. The catalysed reaction is L-proline + NADP(+) = (S)-1-pyrroline-5-carboxylate + NADPH + 2 H(+). It catalyses the reaction L-proline + NAD(+) = (S)-1-pyrroline-5-carboxylate + NADH + 2 H(+). It participates in amino-acid biosynthesis; L-proline biosynthesis; L-proline from L-glutamate 5-semialdehyde: step 1/1. The protein is Pyrroline-5-carboxylate reductase of Actinidia chinensis var. chinensis (Chinese soft-hair kiwi).